The following is a 157-amino-acid chain: Lipoprotein signal peptidase (157 aa).

A run of 3 helical transmembrane segments spans residues 10-30 (LVFM…KYAI), 58-78 (FLEG…FIFL), and 84-104 (LFKN…SNVL). Catalysis depends on residues D114 and D131. Residues 122-142 (FDFAIFNFADVMIDVGVGVLL) form a helical membrane-spanning segment.

This sequence belongs to the peptidase A8 family.

The protein localises to the cell inner membrane. The catalysed reaction is Release of signal peptides from bacterial membrane prolipoproteins. Hydrolyzes -Xaa-Yaa-Zaa-|-(S,diacylglyceryl)Cys-, in which Xaa is hydrophobic (preferably Leu), and Yaa (Ala or Ser) and Zaa (Gly or Ala) have small, neutral side chains.. Its pathway is protein modification; lipoprotein biosynthesis (signal peptide cleavage). This protein specifically catalyzes the removal of signal peptides from prolipoproteins. The protein is Lipoprotein signal peptidase of Helicobacter pylori (strain ATCC 700392 / 26695) (Campylobacter pylori).